The following is a 1134-amino-acid chain: Envelopment polyprotein (1134 aa).

Positions 1–16 (MWSLLLLAALVGQGFA) are cleaved as a signal peptide. Over 17–484 (LKNVFDMRIQ…PGFHGWATAA (468 aa)) the chain is Lumenal. Cystine bridges form between C27–C149, C61–C155, C107–C126, C131–C136, C173–C183, C208–C245, C232–C349, C374–C433, C378–C387, and C403–C422. Residue N132 is glycosylated (N-linked (GlcNAc...) asparagine; by host). Residues N233 and N345 are each glycosylated (N-linked (GlcNAc...) asparagine; by host). Residue N397 is glycosylated (N-linked (GlcNAc...) asparagine; by host). A helical membrane pass occupies residues 485–504 (LLITFCFGWVLIPACTLAIL). Residues 505–626 (LVLKFFANIL…NLFRYKSRCY (122 aa)) lie on the Cytoplasmic side of the membrane. Positions 514–531 (LHTSNQENRFKAILRKIK) are binding to the ribonucleoprotein. 2 CCHC-type zinc fingers span residues 543–563 (CEIC…NLSC) and 568–589 (CPYC…YKVC). Binding to the ribonucleoprotein stretches follow at residues 586–603 (YKVC…KKTV), 590–601 (QATHRFREDLKK), and 609–623 (WARL…RYKS). Residues 609–632 (WARLYRTLNLFRYKSRCYILTMWT) form the ITAM domain. The short motif at 613-616 (YRTL) is the YxxL element. The chain crosses the membrane as a helical span at residues 627-647 (ILTMWTLLLIIESILWAASAA). The Lumenal portion of the chain corresponds to 648–1105 (EIPLVPLWTD…WVMGIINGNW (458 aa)). 8 cysteine pairs are disulfide-bonded: C734-C769, C738-C776, C750-C884, C764-C895, C779-C903, C805-C814, C822-C831, and C862-C866. The segment at 756 to 776 (YEYENSWACNPPDCPGVGTGC) is fusion loop. Residue N927 is glycosylated (N-linked (GlcNAc...) asparagine; by host). 5 cysteine pairs are disulfide-bonded: C969–C999, C992–C1044, C1009–C1014, C1045–C1050, and C1084–C1088. The helical transmembrane segment at 1106 to 1125 (VVLIVLCVLLLFSLILLSIL) threads the bilayer. The binding to the ribonucleoprotein stretch occupies residues 1121–1134 (LLSILCPVRKHKKS). Over 1126–1134 (CPVRKHKKS) the chain is Cytoplasmic.

It belongs to the hantavirus envelope glycoprotein family. As to quaternary structure, homodimer. Homotetramer; forms heterotetrameric Gn-Gc spikes in the pre-fusion conformation. Interacts (via C-terminus) with the nucleoprotein. Interacts with host TUFM; this interaction contributes to the virus-induced degradation of mitochondria by autophagy, which leads to degradation of host MAVS and inhibition of type I interferon (IFN) responses. Interacts with host MAP1LC3B; this interaction contributes to the virus-induced degradation of mitochondria by autophagy, which leads to degradation of host MAVS and inhibition of type I interferon (IFN) responses. Homodimer. Homotetramer; forms heterotetrameric Gn-Gc spikes in the pre-fusion conformation. Homotrimer; forms homotrimer in the post-fusion conformation at acidic pH. Interacts (via C-terminus) with the nucleoprotein. Post-translationally, envelope polyprotein precursor is quickly cleaved in vivo just after synthesis, presumably by host signal peptidase.

It is found in the virion membrane. It localises to the host cell surface. The protein localises to the host Golgi apparatus membrane. Its subcellular location is the host endoplasmic reticulum membrane. The protein resides in the host mitochondrion. Its function is as follows. Forms homotetramers with glycoprotein C at the surface of the virion. Attaches the virion to host cell receptors including integrin ITGAV/ITGB3. This attachment induces virion internalization predominantly through clathrin-dependent endocytosis. Mediates the assembly and budding of infectious virus particles through its interaction with the nucleocapsid protein and the viral genome. May dysregulate normal immune and endothelial cell responses through an ITAM motif. Translocates to mitochondria, binds to host TUFM and recruits MAP1LC3B. These interactions induce mitochondrial autophagy and therefore destruction of host MAVS leading to inhibition of type I interferon (IFN) responses. Concomitant breakdown of glycoprotein N is apparently prevented by the nucleoprotein that may inhibit Gn-stimulated autophagosome-lysosome fusion. Interacts with the viral genomic RNA. Forms homotetramers with glycoprotein N at the surface of the virion. Attaches the virion to host cell receptors including integrin ITGAV/ITGB3. This attachment induces virion internalization predominantly through clathrin-dependent endocytosis. Class II fusion protein that promotes fusion of viral membrane with host endosomal membrane after endocytosis of the virion. In Homo sapiens (Human), this protein is Envelopment polyprotein (GP).